The following is a 207-amino-acid chain: Small ribosomal subunit protein uS4c (207 aa).

Residues 92 to 153 (MRLDNILFRL…PKTYQSILSK (62 aa)) enclose the S4 RNA-binding domain.

The protein belongs to the universal ribosomal protein uS4 family. As to quaternary structure, part of the 30S ribosomal subunit. Contacts protein S5. The interaction surface between S4 and S5 is involved in control of translational fidelity.

It localises to the plastid. The protein localises to the chloroplast. Its function is as follows. One of the primary rRNA binding proteins, it binds directly to 16S rRNA where it nucleates assembly of the body of the 30S subunit. In terms of biological role, with S5 and S12 plays an important role in translational accuracy. The protein is Small ribosomal subunit protein uS4c (rps4) of Equisetum laevigatum (Smooth horsetail).